The chain runs to 229 residues: UPF0319 protein Sbal223_2728 (229 aa).

Residues 1–21 form the signal peptide; that stretch reads MKSLLPISSLLVLLGSASAFA.

It belongs to the UPF0319 family.

This Shewanella baltica (strain OS223) protein is UPF0319 protein Sbal223_2728.